The primary structure comprises 2289 residues: DNA polymerase II large subunit (2289 aa).

Disordered regions lie at residues 279 to 330 (IGSD…SPRA) and 544 to 563 (SDTN…NTDD). The span at 292 to 304 (GEADIVKTDKDTN) shows a compositional bias: basic and acidic residues. Residues 305 to 318 (ESETEDGIDNDDYN) show a composition bias toward acidic residues. Residues 544 to 557 (SDTNSASGNTSLRA) are compositionally biased toward polar residues. DOD-type homing endonuclease domains are found at residues 1222–1367 (LLGY…RLGI) and 1755–1911 (LLGQ…RLGV).

It belongs to the archaeal DNA polymerase II family. As to quaternary structure, heterodimer of a large subunit and a small subunit. In terms of processing, this protein undergoes a protein self splicing that involves a post-translational excision of the intervening region (intein) followed by peptide ligation.

It carries out the reaction DNA(n) + a 2'-deoxyribonucleoside 5'-triphosphate = DNA(n+1) + diphosphate. It catalyses the reaction Exonucleolytic cleavage in the 3'- to 5'-direction to yield nucleoside 5'-phosphates.. Functionally, possesses two activities: a DNA synthesis (polymerase) and an exonucleolytic activity that degrades single-stranded DNA in the 3'- to 5'-direction. Has a template-primer preference which is characteristic of a replicative DNA polymerase. This Haloquadratum walsbyi (strain DSM 16790 / HBSQ001) protein is DNA polymerase II large subunit.